A 98-amino-acid chain; its full sequence is ESAT-6-like protein EsxK (98 aa).

Belongs to the WXG100 family. CFP-10 subfamily. Strongly interacts with EsxL to form a heterodimeric complex under reducing conditions.

Its subcellular location is the secreted. The polypeptide is ESAT-6-like protein EsxK (Mycobacterium tuberculosis (strain CDC 1551 / Oshkosh)).